A 918-amino-acid polypeptide reads, in one-letter code: Chaperone protein ClpC4, chloroplastic (918 aa).

Residues 266–515 (LMEYGTNLTK…RLRNAQCKPS (250 aa)) are i. Residues 311–318 (GEPGVGKT) and 653–660 (GPTGVGKS) each bind ATP. Residues 579–774 (VTEDDVRHAI…LIVMTTNIGS (196 aa)) are II.

This sequence belongs to the ClpA/ClpB family. ClpC subfamily.

It is found in the plastid. Its subcellular location is the chloroplast. In terms of biological role, molecular chaperone that may interact with a ClpP-like protease involved in degradation of denatured proteins in the chloroplast. The chain is Chaperone protein ClpC4, chloroplastic (CPLC4) from Oryza sativa subsp. japonica (Rice).